The following is a 247-amino-acid chain: Cytochrome c oxidase subunit 2 (247 aa).

The Mitochondrial intermembrane portion of the chain corresponds to 1–38 (MKEMMMSNMFNDVPTPWAMFFQDSATPNMEGMLELHNN). The chain crosses the membrane as a helical span at residues 39–58 (VVFYLCMMLGFVTFMLYNML). The Mitochondrial matrix portion of the chain corresponds to 59 to 78 (TTYNKSVMPYKYLNQGQFME). Residues 79-103 (MMWTTLPAVMLLMIAFPSFILLYMC) traverse the membrane as a helical segment. Residues 104–247 (DEVMAPAMTI…ADFLAWIDEQ (144 aa)) lie on the Mitochondrial intermembrane side of the membrane. Residues His182, Cys217, Glu219, Cys221, His225, and Met228 each contribute to the Cu cation site. Glu219 contacts Mg(2+).

This sequence belongs to the cytochrome c oxidase subunit 2 family. In terms of assembly, component of the cytochrome c oxidase (complex IV, CIV), a multisubunit enzyme composed of a catalytic core of 3 subunits and several supernumerary subunits. The complex exists as a monomer or a dimer and forms supercomplexes (SCs) in the inner mitochondrial membrane with ubiquinol-cytochrome c oxidoreductase (cytochrome b-c1 complex, complex III, CIII). Cu cation serves as cofactor.

It localises to the mitochondrion inner membrane. It carries out the reaction 4 Fe(II)-[cytochrome c] + O2 + 8 H(+)(in) = 4 Fe(III)-[cytochrome c] + 2 H2O + 4 H(+)(out). In terms of biological role, component of the cytochrome c oxidase, the last enzyme in the mitochondrial electron transport chain which drives oxidative phosphorylation. The respiratory chain contains 3 multisubunit complexes succinate dehydrogenase (complex II, CII), ubiquinol-cytochrome c oxidoreductase (cytochrome b-c1 complex, complex III, CIII) and cytochrome c oxidase (complex IV, CIV), that cooperate to transfer electrons derived from NADH and succinate to molecular oxygen, creating an electrochemical gradient over the inner membrane that drives transmembrane transport and the ATP synthase. Cytochrome c oxidase is the component of the respiratory chain that catalyzes the reduction of oxygen to water. Electrons originating from reduced cytochrome c in the intermembrane space (IMS) are transferred via the dinuclear copper A center (CU(A)) of subunit 2 and heme A of subunit 1 to the active site in subunit 1, a binuclear center (BNC) formed by heme A3 and copper B (CU(B)). The BNC reduces molecular oxygen to 2 water molecules using 4 electrons from cytochrome c in the IMS and 4 protons from the mitochondrial matrix. In Brettanomyces custersianus (Yeast), this protein is Cytochrome c oxidase subunit 2 (COX2).